Consider the following 359-residue polypeptide: Molybdenum import ATP-binding protein ModC (359 aa).

In terms of domain architecture, ABC transporter spans 1–229 (MLELNFSQQL…SALRPWLQRE (229 aa)). 31 to 38 (GLSGAGKT) serves as a coordination point for ATP. In terms of domain architecture, Mop spans 289–354 (SSSIRNILPV…IKSVSFNRQN (66 aa)).

It belongs to the ABC transporter superfamily. Molybdate importer (TC 3.A.1.8) family. In terms of assembly, the complex is composed of two ATP-binding proteins (ModC), two transmembrane proteins (ModB) and a solute-binding protein (ModA).

The protein resides in the cell inner membrane. It catalyses the reaction molybdate(out) + ATP + H2O = molybdate(in) + ADP + phosphate + H(+). Functionally, part of the ABC transporter complex ModABC involved in molybdenum import. Responsible for energy coupling to the transport system. In Yersinia pestis bv. Antiqua (strain Antiqua), this protein is Molybdenum import ATP-binding protein ModC.